A 248-amino-acid chain; its full sequence is Ribonuclease PH (248 aa).

Residues Arg86 and 124-126 (GTR) each bind phosphate.

It belongs to the RNase PH family. As to quaternary structure, homohexameric ring arranged as a trimer of dimers.

It carries out the reaction tRNA(n+1) + phosphate = tRNA(n) + a ribonucleoside 5'-diphosphate. Phosphorolytic 3'-5' exoribonuclease that plays an important role in tRNA 3'-end maturation. Removes nucleotide residues following the 3'-CCA terminus of tRNAs; can also add nucleotides to the ends of RNA molecules by using nucleoside diphosphates as substrates, but this may not be physiologically important. Probably plays a role in initiation of 16S rRNA degradation (leading to ribosome degradation) during starvation. This chain is Ribonuclease PH, found in Listeria monocytogenes serotype 4b (strain CLIP80459).